The chain runs to 554 residues: Intraflagellar transport protein 56 (554 aa).

Residues 1–23 (MMLSRAKPAVGNEVQQIDKKKKK) are disordered. TPR repeat units follow at residues 57-90 (EDTE…EGCN), 92-125 (DVWV…LQNR), 151-184 (IEDQ…NRDF), and 468-501 (ANDC…EGKR).

This sequence belongs to the IFT56 family. Component of the IFT complex B.

The protein resides in the cell projection. It localises to the cilium. In terms of biological role, component of the intraflagellar transport (IFT) complex B required for transport of proteins in the motile cilium. Required for transport of specific ciliary cargo proteins related to motility, while it is neither required for IFT complex B assembly or motion nor for cilium assembly. Plays a key role in maintaining the integrity of the IFT complex B and the proper ciliary localization of the IFT complex B components. Essential for maintaining proper microtubule organization within the ciliary axoneme. This is Intraflagellar transport protein 56 from Xenopus tropicalis (Western clawed frog).